The following is a 1468-amino-acid chain: Neuropathy target esterase sws (1468 aa).

At 1–34 the chain is on the lumenal side; the sequence is MDVLEMLRASASGSYNTIFSDAWCQYVSKQITAT. The chain crosses the membrane as a helical span at residues 35–55; it reads VYMYCALVMMSLLFIAWFLYF. Topologically, residues 56–1468 are cytoplasmic; the sequence is KRMARLRLRD…RSSPNNETKN (1413 aa). Residue 174–301 participates in a nucleoside 3',5'-cyclic phosphate binding; that stretch reads IFGHFEKPVF…IRVIQVIMIR (128 aa). Polar residues-rich tracts occupy residues 332–348 and 357–366; these read TMSG…SRQA and NQLNLMQSAA. Residues 332–411 form a disordered region; the sequence is TMSGPINSQT…DGSFHGTTNL (80 aa). Phosphoserine is present on residues serine 442 and serine 451. Residues 480 to 607 and 596 to 723 each bind a nucleoside 3',5'-cyclic phosphate; these read ELGL…VVRR and IVLD…LSHR. A PNPLA domain is found at 950 to 1116; it reads LVLGGGGARG…VNNLPGHLWR (167 aa). The GXGXXG motif lies at 954–959; that stretch reads GGGARG. The short motif at 981–985 is the GXSXG element; sequence GVSIG. Serine 983 (nucleophile) is an active-site residue. The Proton acceptor role is filled by aspartate 1103. The DGA/G motif lies at 1103–1105; sequence DGG. Serine 1197 is modified (phosphoserine). The disordered stretch occupies residues 1368–1468; that stretch reads ERKMDKSTQS…RSSPNNETKN (101 aa). Low complexity predominate over residues 1374 to 1383; that stretch reads STQSSPPTSS. The segment covering 1385–1395 has biased composition (basic and acidic residues); it reads TDMRGKEEAKH. A compositionally biased stretch (low complexity) spans 1419-1441; the sequence is TQTGQEQELQQQQKLQQLQQDQG. Basic and acidic residues predominate over residues 1446–1459; it reads QLVDKDKEEDKENR.

The protein belongs to the NTE family. In terms of assembly, interacts with Pka-C3; interaction inhibits the catalytic function of Pka-C3 and the esterase activity of sws.

The protein localises to the endoplasmic reticulum membrane. It carries out the reaction a 1-acyl-sn-glycero-3-phosphocholine + H2O = sn-glycerol 3-phosphocholine + a fatty acid + H(+). Functionally, phospholipase B that deacylates intracellular phosphatidylcholine (PtdCho), generating glycerophosphocholine (GroPtdCho). This deacylation occurs at both sn-2 and sn-1 positions of PtdCho. Its specific chemical modification by certain organophosphorus (OP) compounds leads to distal axonopathy. Plays a role in the signaling mechanism between neurons and glia that regulates glia wrapping during development of the adult brain. Essential for membrane lipid homeostasis and cell survival in both neurons and glia of the adult brain. The sequence is that of Neuropathy target esterase sws from Drosophila sechellia (Fruit fly).